Consider the following 490-residue polypeptide: Aspartyl/glutamyl-tRNA(Asn/Gln) amidotransferase subunit B (490 aa).

Belongs to the GatB/GatE family. GatB subfamily. As to quaternary structure, heterotrimer of A, B and C subunits.

It catalyses the reaction L-glutamyl-tRNA(Gln) + L-glutamine + ATP + H2O = L-glutaminyl-tRNA(Gln) + L-glutamate + ADP + phosphate + H(+). The catalysed reaction is L-aspartyl-tRNA(Asn) + L-glutamine + ATP + H2O = L-asparaginyl-tRNA(Asn) + L-glutamate + ADP + phosphate + 2 H(+). Its function is as follows. Allows the formation of correctly charged Asn-tRNA(Asn) or Gln-tRNA(Gln) through the transamidation of misacylated Asp-tRNA(Asn) or Glu-tRNA(Gln) in organisms which lack either or both of asparaginyl-tRNA or glutaminyl-tRNA synthetases. The reaction takes place in the presence of glutamine and ATP through an activated phospho-Asp-tRNA(Asn) or phospho-Glu-tRNA(Gln). In Methylorubrum extorquens (strain CM4 / NCIMB 13688) (Methylobacterium extorquens), this protein is Aspartyl/glutamyl-tRNA(Asn/Gln) amidotransferase subunit B.